We begin with the raw amino-acid sequence, 264 residues long: Agamous-like MADS-box protein AGL15 (264 aa).

The MADS-box domain maps to 3–57 (RGKIEIKRIENANSRQVTFSKRRAGLLKKAHELSVLCDAEVAVIVFSKSGKLFEF). The K-box domain occupies 87-177 (NQEECTEVDL…RRQVQELRSF (91 aa)). Residues 223 to 264 (LQLGLPGEAHDTRKNEGDRESPSSDSVTTSTTRATAQRISLV) are disordered. Residues 230–244 (EAHDTRKNEGDRESP) are compositionally biased toward basic and acidic residues. The span at 245–257 (SSDSVTTSTTRAT) shows a compositional bias: low complexity.

The protein localises to the nucleus. Functionally, probable transcription factor. This chain is Agamous-like MADS-box protein AGL15 (AGL15), found in Brassica napus (Rape).